The sequence spans 315 residues: Aspartate carbamoyltransferase catalytic subunit (315 aa).

Carbamoyl phosphate contacts are provided by arginine 55 and threonine 56. Lysine 83 contributes to the L-aspartate binding site. Positions 105, 138, and 141 each coordinate carbamoyl phosphate. Residues arginine 171 and arginine 225 each contribute to the L-aspartate site. Positions 266 and 267 each coordinate carbamoyl phosphate.

This sequence belongs to the aspartate/ornithine carbamoyltransferase superfamily. ATCase family. In terms of assembly, heterododecamer (2C3:3R2) of six catalytic PyrB chains organized as two trimers (C3), and six regulatory PyrI chains organized as three dimers (R2).

The catalysed reaction is carbamoyl phosphate + L-aspartate = N-carbamoyl-L-aspartate + phosphate + H(+). It functions in the pathway pyrimidine metabolism; UMP biosynthesis via de novo pathway; (S)-dihydroorotate from bicarbonate: step 2/3. Catalyzes the condensation of carbamoyl phosphate and aspartate to form carbamoyl aspartate and inorganic phosphate, the committed step in the de novo pyrimidine nucleotide biosynthesis pathway. The sequence is that of Aspartate carbamoyltransferase catalytic subunit from Mycolicibacterium vanbaalenii (strain DSM 7251 / JCM 13017 / BCRC 16820 / KCTC 9966 / NRRL B-24157 / PYR-1) (Mycobacterium vanbaalenii).